A 272-amino-acid polypeptide reads, in one-letter code: Shikimate dehydrogenase (NADP(+)) (272 aa).

Shikimate-binding positions include 14–16 (SKS) and Thr61. Residue Lys65 is the Proton acceptor of the active site. Glu77 is a binding site for NADP(+). Residues Asn86 and Asp102 each contribute to the shikimate site. Residues 126 to 130 (GAGGA), 149 to 154 (NRTVSR), and Met213 each bind NADP(+). Tyr215 provides a ligand contact to shikimate. An NADP(+)-binding site is contributed by Gly237.

It belongs to the shikimate dehydrogenase family. As to quaternary structure, homodimer.

The enzyme catalyses shikimate + NADP(+) = 3-dehydroshikimate + NADPH + H(+). Its pathway is metabolic intermediate biosynthesis; chorismate biosynthesis; chorismate from D-erythrose 4-phosphate and phosphoenolpyruvate: step 4/7. Involved in the biosynthesis of the chorismate, which leads to the biosynthesis of aromatic amino acids. Catalyzes the reversible NADPH linked reduction of 3-dehydroshikimate (DHSA) to yield shikimate (SA). The chain is Shikimate dehydrogenase (NADP(+)) from Escherichia coli O139:H28 (strain E24377A / ETEC).